We begin with the raw amino-acid sequence, 510 residues long: NAD(P)H-quinone oxidoreductase subunit 2 A, chloroplastic (510 aa).

Transmembrane regions (helical) follow at residues 24 to 44 (LLLFNGSFIFPECILIFGLIL), 59 to 79 (WFYFISSTCLVISITALLFRW), 99 to 119 (IFQFLILLCSTLCIPLSVEYI), 124 to 144 (MAITEFLLFVLTATLGGMFLC), 149 to 169 (LITIFVAPECFSLCSYLLSGY), 183 to 203 (YLLMGGAGSSILVHGFSWLYG), 229 to 249 (ISLALISITVGLGFKLSPAPF), 295 to 315 (WHLLLEILAILSMILGNLLAI), 323 to 343 (MLAYSSIGQIGYVIIGIIVGD), 354 to 374 (YMLFYISMNLGTFACIVLFGL), 395 to 415 (ALSLALCLLSLGGLPPLAGFF), and 418 to 438 (LYLFWCGWQAGLYFLVSIGLL).

This sequence belongs to the complex I subunit 2 family. As to quaternary structure, NDH is composed of at least 16 different subunits, 5 of which are encoded in the nucleus.

The protein resides in the plastid. The protein localises to the chloroplast thylakoid membrane. It carries out the reaction a plastoquinone + NADH + (n+1) H(+)(in) = a plastoquinol + NAD(+) + n H(+)(out). It catalyses the reaction a plastoquinone + NADPH + (n+1) H(+)(in) = a plastoquinol + NADP(+) + n H(+)(out). Functionally, NDH shuttles electrons from NAD(P)H:plastoquinone, via FMN and iron-sulfur (Fe-S) centers, to quinones in the photosynthetic chain and possibly in a chloroplast respiratory chain. The immediate electron acceptor for the enzyme in this species is believed to be plastoquinone. Couples the redox reaction to proton translocation, and thus conserves the redox energy in a proton gradient. The protein is NAD(P)H-quinone oxidoreductase subunit 2 A, chloroplastic of Triticum aestivum (Wheat).